The following is a 207-amino-acid chain: MAMAMEISLPFVGSSMALSAGKSRNSVSRISRVGFSSVSAVHVPRRMFMQLSGFGSVLTLLDFPSLAAPVPQMKEPEVIRTLKLPSGVRYQEIIEGEGREAHEGDLVELNYVCRRANGYFVHSTVDQFSGESSPVKLILDENDVIEGLKEVLVGMKAGGKRRALIPPSVGYINETLKPIPEEFGPRRSLLSHANEPLVFEIQLLKVL.

The PPIase FKBP-type domain occupies 104–207; it reads GDLVELNYVC…VFEIQLLKVL (104 aa).

The protein belongs to the FKBP-type PPIase family.

Its subcellular location is the plastid. The protein localises to the chloroplast thylakoid lumen. The enzyme catalyses [protein]-peptidylproline (omega=180) = [protein]-peptidylproline (omega=0). Its function is as follows. PPIases accelerate the folding of proteins. It catalyzes the cis-trans isomerization of proline imidic peptide bonds in oligopeptides. The protein is Peptidyl-prolyl cis-trans isomerase FKBP16-1, chloroplastic (FKBP16-1) of Arabidopsis thaliana (Mouse-ear cress).